The primary structure comprises 101 residues: Small ribosomal subunit protein bS18c (101 aa).

Positions 1 to 19 (MDKSKRLFRKSKRSFRRRL) are enriched in basic residues. Positions 1–23 (MDKSKRLFRKSKRSFRRRLPPIG) are disordered.

Belongs to the bacterial ribosomal protein bS18 family. In terms of assembly, part of the 30S ribosomal subunit.

It localises to the plastid. The protein localises to the chloroplast. The polypeptide is Small ribosomal subunit protein bS18c (Liriodendron tulipifera (Tuliptree)).